Consider the following 323-residue polypeptide: Transmembrane protein 171 (323 aa).

The next 4 helical transmembrane spans lie at I22–F42, M57–A77, L112–V132, and F159–V179. Polar residues predominate over residues Y251 to A268. Residues Y251–P323 form a disordered region. The span at S281–S290 shows a compositional bias: low complexity.

It localises to the membrane. In Rattus norvegicus (Rat), this protein is Transmembrane protein 171 (Tmem171).